The following is a 563-amino-acid chain: Anaerobic glycerol-3-phosphate dehydrogenase subunit A (563 aa).

20–48 (DVIIIGGGATGAGIARDCALRGIDCILLE) contacts FAD.

The protein belongs to the FAD-dependent glycerol-3-phosphate dehydrogenase family. As to quaternary structure, composed of a catalytic GlpA/B dimer and of membrane bound GlpC. The cofactor is FAD. Requires FMN as cofactor.

It localises to the cell inner membrane. It catalyses the reaction a quinone + sn-glycerol 3-phosphate = dihydroxyacetone phosphate + a quinol. It functions in the pathway polyol metabolism; glycerol degradation via glycerol kinase pathway; glycerone phosphate from sn-glycerol 3-phosphate (anaerobic route): step 1/1. This is Anaerobic glycerol-3-phosphate dehydrogenase subunit A (glpA) from Haemophilus influenzae (strain ATCC 51907 / DSM 11121 / KW20 / Rd).